The following is a 132-amino-acid chain: uncharacterized protein (132 aa).

Residues Met1 to Thr34 are disordered.

The protein to M.tuberculosis Rv2656c.

This is an uncharacterized protein from Mycobacterium tuberculosis (strain CDC 1551 / Oshkosh).